We begin with the raw amino-acid sequence, 296 residues long: Trimeric intracellular cation channel type A (296 aa).

The Lumenal segment spans residues 1–19; it reads MELPGALQLGELAAAFASV. A helical transmembrane segment spans residues 20 to 37; sequence PVFPLFDAAYFIVSVLYL. Over 38–51 the chain is Cytoplasmic; the sequence is KYEPGAVEMSRKSP. A helical membrane pass occupies residues 52 to 73; sequence FASWLCAMLHCFGSYILADLLL. Gly-74 provides a ligand contact to Ca(2+). Over 74 to 85 the chain is Lumenal; it reads GESPIHYFSNNS. A helical transmembrane segment spans residues 86–103; sequence SVILATAVWYLIFFCPMN. The Cytoplasmic segment spans residues 104-107; it reads LFYK. Residues 108 to 126 form a helical membrane-spanning segment; it reads CVSFLPVKLIFVAMKEVVR. A 1,2-diacyl-sn-glycero-3-phospho-(1D-myo-inositol-4,5-bisphosphate) contacts are provided by Lys-122 and Arg-126. Residues 127–144 are Lumenal-facing; the sequence is VRKIAAGVHHAHHQYHHG. The chain crosses the membrane as a helical span at residues 145 to 162; the sequence is WFIMMATGWVKGSGVALM. The Cytoplasmic portion of the chain corresponds to 163–183; sequence SNFEQLLRGVWRPETNEILHM. A helical membrane pass occupies residues 184-201; the sequence is SFPTKASLYGTVLFTLQQ. At 202–209 the chain is on the lumenal side; it reads THWLPVSE. Residues 210-230 traverse the membrane as a helical segment; it reads ANLVFFFTMFMIVCKVFMTAT. At 231–273 the chain is on the cytoplasmic side; that stretch reads HSHASPFAPVEGFICPVFFGSVSSGHTSHHNQHGHSHEASYQP. Residues 256-296 are disordered; the sequence is HTSHHNQHGHSHEASYQPPPPVKSKEELNEGTRKRKAKKAE. The segment covering 278–287 has biased composition (basic and acidic residues); it reads KSKEELNEGT.

The protein belongs to the TMEM38 family. Homotrimer; conformation seems to be controled by binding to diacylglycerol (DAG).

The protein resides in the sarcoplasmic reticulum membrane. It is found in the nucleus membrane. It carries out the reaction K(+)(in) = K(+)(out). Channel activity is activated by a change of voltage within the sarcoplasmic reticulum lumen and blocked by luminal high Ca(2+) levels. Functionally, intracellular monovalent cation channel required for maintenance of rapid intracellular calcium release. Acts as a potassium counter-ion channel that functions in synchronization with calcium release from intracellular stores. Opened by a change of voltage within the sarcoplasmic reticulum lumen. This is Trimeric intracellular cation channel type A (TMEM38A) from Gallus gallus (Chicken).